The chain runs to 846 residues: Leucine--tRNA ligase (846 aa).

The 'HIGH' region motif lies at 42 to 52 (PYPSGNLHMGH). The 'KMSKS' region signature appears at 586–590 (KMSKS). Lysine 589 contributes to the ATP binding site.

The protein belongs to the class-I aminoacyl-tRNA synthetase family.

The protein resides in the cytoplasm. The enzyme catalyses tRNA(Leu) + L-leucine + ATP = L-leucyl-tRNA(Leu) + AMP + diphosphate. The protein is Leucine--tRNA ligase of Heliobacterium modesticaldum (strain ATCC 51547 / Ice1).